We begin with the raw amino-acid sequence, 146 residues long: MHLLQLLFRASPATLLLVLCLQLGANKAQDNTRKIIIKDFDIPKSVRPNDEVTAVLAVQTELKECMVIKTYLISSVPLEGAFNYKYTACLCDENPKTFYWDFYTNRTVQIAAVVDVIRELGICPDDAAVIPIKNNRFYTTETLEVE.

The N-terminal stretch at 1 to 28 is a signal peptide; sequence MHLLQLLFRASPATLLLVLCLQLGANKA. Gln-29 carries the pyrrolidone carboxylic acid modification. Intrachain disulfides connect Cys-65/Cys-91 and Cys-89/Cys-123. The N-linked (GlcNAc...) asparagine glycan is linked to Asn-105.

Belongs to the PIP family. As to quaternary structure, monomer. Interacts with AZGP1.

The protein localises to the secreted. This Pongo pygmaeus (Bornean orangutan) protein is Prolactin-inducible protein homolog (PIP).